A 146-amino-acid chain; its full sequence is Hut operon positive regulatory protein (146 aa).

This sequence belongs to the HutP family. Homohexamer.

Its function is as follows. Antiterminator that binds to cis-acting regulatory sequences on the mRNA in the presence of histidine, thereby suppressing transcription termination and activating the hut operon for histidine utilization. This Bacillus cytotoxicus (strain DSM 22905 / CIP 110041 / 391-98 / NVH 391-98) protein is Hut operon positive regulatory protein.